Reading from the N-terminus, the 325-residue chain is GMP reductase (325 aa).

C173 acts as the Thioimidate intermediate in catalysis. Residue 202 to 225 (IIADGGIRSHGDIAKSIRFGATMV) participates in NADP(+) binding.

Belongs to the IMPDH/GMPR family. GuaC type 2 subfamily.

The catalysed reaction is IMP + NH4(+) + NADP(+) = GMP + NADPH + 2 H(+). Catalyzes the irreversible NADPH-dependent deamination of GMP to IMP. It functions in the conversion of nucleobase, nucleoside and nucleotide derivatives of G to A nucleotides, and in maintaining the intracellular balance of A and G nucleotides. This is GMP reductase from Paracidovorax citrulli (strain AAC00-1) (Acidovorax citrulli).